The sequence spans 234 residues: Phosphoglycolate phosphatase (234 aa).

Catalysis depends on D13, which acts as the Nucleophile. Residues D13, D15, and D175 each coordinate Mg(2+).

This sequence belongs to the HAD-like hydrolase superfamily. CbbY/CbbZ/Gph/YieH family. In terms of assembly, monomer. The cofactor is Mg(2+). It depends on chloride as a cofactor.

The catalysed reaction is 2-phosphoglycolate + H2O = glycolate + phosphate. It functions in the pathway organic acid metabolism; glycolate biosynthesis; glycolate from 2-phosphoglycolate: step 1/1. Its function is as follows. Specifically catalyzes the dephosphorylation of 2-phosphoglycolate. Is involved in the dissimilation of the intracellular 2-phosphoglycolate formed during the DNA repair of 3'-phosphoglycolate ends, a major class of DNA lesions induced by oxidative stress. This chain is Phosphoglycolate phosphatase, found in Pectobacterium atrosepticum (strain SCRI 1043 / ATCC BAA-672) (Erwinia carotovora subsp. atroseptica).